Reading from the N-terminus, the 249-residue chain is Enolase-phosphatase E1 (249 aa).

Asp9 and Glu11 together coordinate Mg(2+). Substrate contacts are provided by residues Ser137–Ser138 and Lys177. Asp204 is a binding site for Mg(2+).

It belongs to the HAD-like hydrolase superfamily. MasA/MtnC family. In terms of assembly, monomer. Requires Mg(2+) as cofactor.

It localises to the cytoplasm. The protein resides in the nucleus. It catalyses the reaction 5-methylsulfanyl-2,3-dioxopentyl phosphate + H2O = 1,2-dihydroxy-5-(methylsulfanyl)pent-1-en-3-one + phosphate. The protein operates within amino-acid biosynthesis; L-methionine biosynthesis via salvage pathway; L-methionine from S-methyl-5-thio-alpha-D-ribose 1-phosphate: step 3/6. It functions in the pathway amino-acid biosynthesis; L-methionine biosynthesis via salvage pathway; L-methionine from S-methyl-5-thio-alpha-D-ribose 1-phosphate: step 4/6. Functionally, bifunctional enzyme that catalyzes the enolization of 2,3-diketo-5-methylthiopentyl-1-phosphate (DK-MTP-1-P) into the intermediate 2-hydroxy-3-keto-5-methylthiopentenyl-1-phosphate (HK-MTPenyl-1-P), which is then dephosphorylated to form the acireductone 1,2-dihydroxy-3-keto-5-methylthiopentene (DHK-MTPene). The sequence is that of Enolase-phosphatase E1 from Lodderomyces elongisporus (strain ATCC 11503 / CBS 2605 / JCM 1781 / NBRC 1676 / NRRL YB-4239) (Yeast).